Here is a 215-residue protein sequence, read N- to C-terminus: Adenylate kinase (215 aa).

10 to 15 (GAGKGT) is a binding site for ATP. An NMP region spans residues 30–59 (STGDMFRAAIKDQTPLGQEAKSYMDKGELV). AMP is bound by residues Thr-31, Arg-36, 57-59 (ELV), 85-88 (GFPR), and Gln-92. The interval 126–163 (GRRICPTCGATYHVIYNPPKVEGVCDIDGSALVQREDD) is LID. Arg-127 provides a ligand contact to ATP. Zn(2+) is bound by residues Cys-130 and Cys-133. Position 136–137 (136–137 (TY)) interacts with ATP. Zn(2+) contacts are provided by Cys-150 and Asp-153. The AMP site is built by Arg-160 and Arg-171. Arg-199 contributes to the ATP binding site.

It belongs to the adenylate kinase family. In terms of assembly, monomer.

It localises to the cytoplasm. It catalyses the reaction AMP + ATP = 2 ADP. It participates in purine metabolism; AMP biosynthesis via salvage pathway; AMP from ADP: step 1/1. Catalyzes the reversible transfer of the terminal phosphate group between ATP and AMP. Plays an important role in cellular energy homeostasis and in adenine nucleotide metabolism. This Exiguobacterium sibiricum (strain DSM 17290 / CCUG 55495 / CIP 109462 / JCM 13490 / 255-15) protein is Adenylate kinase.